Here is a 162-residue protein sequence, read N- to C-terminus: Caveolin-2 (162 aa).

Residues 1–86 (MGLETEKADV…FEISKYVIYK (86 aa)) lie on the Cytoplasmic side of the membrane. Y19 carries the phosphotyrosine; by SRC modification. 2 positions are modified to phosphoserine: S20 and S23. Residue Y27 is modified to Phosphotyrosine; by SRC. S36 carries the phosphoserine modification. The helical intramembrane region spans 87–107 (FLTVFLAIPLAFAAGIIFATL). Residues 108–162 (SCLHIWIIMPFVKTCLMVLPSVQTIWRSVTDAVIAPLCTSVGRVFSSVSLQLSRD) lie on the Cytoplasmic side of the membrane.

It belongs to the caveolin family. In terms of assembly, monomer or homodimer. Interacts with CAV1; the interaction forms a stable heterooligomeric complex that is required for targeting to lipid rafts and for caveolae formation. Tyrosine phosphorylated forms do not form heterooligomers with the Tyr-19-phosphorylated form existing as a monomer or dimer, and the Tyr-27-form as a monomer only. Interacts (tyrosine phosphorylated form) with the SH2 domain-containing proteins, RASA1, NCK1 and SRC. Interacts (tyrosine phosphorylated form) with INSR, the interaction (Tyr-27-phosphorylated form) is increased on insulin stimulation. Interacts (Tyr-19 phosphorylated form) with MAPK1 (phosphorylated form); the interaction, promoted by insulin, leads to nuclear location and MAPK1 activation. Interacts with STAT3; the interaction is increased on insulin-induced tyrosine phosphorylation leading to STAT activation. In terms of processing, phosphorylated on serine and tyrosine residues. CAV1 promotes phosphorylation on Ser-23 which then targets the complex to the plasma membrane, lipid rafts and caveolae. Phosphorylation on Ser-36 appears to modulate mitosis in endothelial cells. Phosphorylation on both Tyr-19 and Tyr-27 is required for insulin-induced 'Ser-727' phosphorylation of STAT3 and its activation. Phosphorylation on Tyr-19 is required for insulin-induced phosphorylation of MAPK1 and DNA binding of STAT3. Tyrosine phosphorylation is induced by both EGF and insulin (By. similarity).

It is found in the nucleus. It localises to the cytoplasm. The protein resides in the golgi apparatus membrane. The protein localises to the cell membrane. Its subcellular location is the membrane. It is found in the caveola. May act as a scaffolding protein within caveolar membranes. Interacts directly with G-protein alpha subunits and can functionally regulate their activity. Acts as an accessory protein in conjunction with CAV1 in targeting to lipid rafts and driving caveolae formation. The Ser-36 phosphorylated form has a role in modulating mitosis in endothelial cells. Positive regulator of cellular mitogenesis of the MAPK signaling pathway. Required for the insulin-stimulated nuclear translocation and activation of MAPK1 and STAT3, and the subsequent regulation of cell cycle progression. This Carollia perspicillata (Seba's short-tailed bat) protein is Caveolin-2 (CAV2).